We begin with the raw amino-acid sequence, 807 residues long: MNDHTTIAASGGRLSDRELHDLDAYWRAANYLTIGQIYLLDNPLLREPLRLEHVKPRLLGHWGTSPGLSFIYAHLNRAIRLRDANVIYICGPGHGGPAMVANTYLEGTYSELNPDIAMDEQGMRKLFRQFSFPGGIPSHAAPDVPGSIHEGGELGYSLSHAYGAAFDNPDLVVACVVGDGEAETGPLAAAWHSNKFLNPARDGAVLPILHLNGYKIANPTILARIPEDELRALFAGYGYEPLFVAGHEPALMHQRMATVLDDAFDRISAIKHAARNGSGATGSRPEWPMIVLRSPKGWTGPKEVDGLKTEGFWRSHQVPLSGLAENPAHLKLLEEWLKSYRPEELFDAAGAPVASIRATAPQATKRMSANPHANGGLLRRSLELPGLHDHAVSLERPGAVKAESTRVMGSFLRDVMRLNEVAKNFRIVGPDETASNRLQDVFEVTERGWMEKILPEDVHLGREGRVLEILSEHTCQGWLEGYLLTGRHGLFSCYEAFIHIVDSMFNQHAKWLDACREIPWRRPIASLNYLLSSHVWHQEHNGFSHQDPGFIDVALNKKADIVRVYLPPDANTLLCVTDHVLQTWNRINVIVAGKPPSWQWLSMDKAIVHCRAGIGVWDWASTDDGAEPDVVMACAGDVPTLETLAAVQILRQQVPDLRIRVVNVVDLMTLQPKEYHPHGLSDREFDALFTPDKPVIFAYHGYPWTIHRLTYRRTNHDNIHVRGYNEEGTTTTPFDMTVLNGLDRFHIVQSVLDWVPRLKGVRVSLKQAMDSKLLEHRAYICSHGQDMPEILDWKWGQDPDAAPKRPD.

This sequence belongs to the XFP family. Requires thiamine diphosphate as cofactor.

In Mesorhizobium japonicum (strain LMG 29417 / CECT 9101 / MAFF 303099) (Mesorhizobium loti (strain MAFF 303099)), this protein is Probable phosphoketolase.